The primary structure comprises 1822 residues: ADP-ribosylation factor guanine nucleotide-exchange factor sec72 (1822 aa).

Disordered stretches follow at residues methionine 1–aspartate 54 and aspartate 66–leucine 126. Residue serine 44 is modified to Phosphoserine. Polar residues predominate over residues aspartate 72–lysine 84. Over residues glutamine 85–asparagine 110 the composition is skewed to basic and acidic residues. Phosphoserine occurs at positions 122 and 125. The HUS box motif lies at asparagine 547–aspartate 551. Threonine 597 is modified (phosphothreonine). Serine 653 carries the post-translational modification Phosphoserine. At threonine 654 the chain carries Phosphothreonine. Serine 669 is subject to Phosphoserine. The 189-residue stretch at glutamine 701–asparagine 889 folds into the SEC7 domain. The segment at glutamate 898 to asparagine 1106 is HDS1 domain. A Phosphoserine modification is found at serine 1110. Disordered stretches follow at residues asparagine 1111–lysine 1131 and glutamate 1584–isoleucine 1610. Low complexity-rich tracts occupy residues serine 1117–serine 1130 and serine 1597–isoleucine 1610. Serine 1606 and serine 1609 each carry phosphoserine.

The protein localises to the cytoplasm. It is found in the golgi apparatus. Its subcellular location is the trans-Golgi network. The protein resides in the cytoplasmic vesicle. It localises to the COPI-coated vesicle membrane. The protein localises to the COPII-coated vesicle membrane. Guanine exchange factor that acts as an activator of arf1 at the trans-Golgi net-work and is thus involved in vesicular budding and traffic between compartments of the Golgi apparatus. Activation of Arf (ADP-ribosylation factor) GTPases is essential for vesicle formation via recruitment of cargo adapters and coat proteins necessary for Golgi trafficking. Involved in the resistance to tamoxifen (TAM), an anticancer drug used to treat estrogen receptor (ER)-positive breast cancer. This is ADP-ribosylation factor guanine nucleotide-exchange factor sec72 from Schizosaccharomyces pombe (strain 972 / ATCC 24843) (Fission yeast).